Reading from the N-terminus, the 95-residue chain is Large ribosomal subunit protein uL23 (95 aa).

The protein belongs to the universal ribosomal protein uL23 family. As to quaternary structure, part of the 50S ribosomal subunit. Contacts protein L29, and trigger factor when it is bound to the ribosome.

In terms of biological role, one of the early assembly proteins it binds 23S rRNA. One of the proteins that surrounds the polypeptide exit tunnel on the outside of the ribosome. Forms the main docking site for trigger factor binding to the ribosome. In Desulforapulum autotrophicum (strain ATCC 43914 / DSM 3382 / VKM B-1955 / HRM2) (Desulfobacterium autotrophicum), this protein is Large ribosomal subunit protein uL23.